The sequence spans 308 residues: Olfactory receptor 4N5 (308 aa).

At 1-25 (METQNLTVVTEFILLGLTQSQDAQL) the chain is on the extracellular side. Asparagine 5 carries N-linked (GlcNAc...) asparagine glycosylation. A helical membrane pass occupies residues 26-49 (LVFVLVLIFYLIILPGNFLIIFTI). Residues 50–57 (KSDPGLTA) lie on the Cytoplasmic side of the membrane. Residues 58–79 (PLYFFLGNLALLDASYSFIVVP) traverse the membrane as a helical segment. Over 80–100 (RMLVDFLSEKKVISYRSCITQ) the chain is Extracellular. A disulfide bond links cysteine 97 and cysteine 189. Residues 101 to 120 (LFFLHFLGAGEMFLLVVMAF) form a helical membrane-spanning segment. Topologically, residues 121–139 (DRYIAICRPLHYSTIMNPR) are cytoplasmic. The helical transmembrane segment at 140–158 (ACYALSLVLWLGGFIHSIV) threads the bilayer. Over 159–195 (QVALILHLPFCGPNQLDNFFCDVPQVIKLACTNTFVV) the chain is Extracellular. Residues 196–219 (ELLMVSNSGLLSLLCFLGLLASYA) form a helical membrane-spanning segment. The Cytoplasmic portion of the chain corresponds to 220-235 (VILCRIREHSSEGKSK). Residues 236–258 (AISTCTTHIIIIFLMFGPAIFIY) traverse the membrane as a helical segment. Residues 259-269 (TCPFQAFPADK) lie on the Extracellular side of the membrane. The helical transmembrane segment at 270 to 289 (VVSLFHTVIFPLMNPVIYTL) threads the bilayer. The Cytoplasmic segment spans residues 290–308 (RNQEVKASMRKLLSQHMFC).

Belongs to the G-protein coupled receptor 1 family.

Its subcellular location is the cell membrane. Odorant receptor. The chain is Olfactory receptor 4N5 (OR4N5) from Homo sapiens (Human).